The following is a 320-amino-acid chain: Probable trehalose-phosphate phosphatase C (320 aa).

The protein belongs to the trehalose phosphatase family. It depends on a divalent metal cation as a cofactor.

It carries out the reaction alpha,alpha-trehalose 6-phosphate + H2O = alpha,alpha-trehalose + phosphate. It functions in the pathway glycan biosynthesis; trehalose biosynthesis. In terms of biological role, removes the phosphate from trehalose 6-phosphate to produce free trehalose. Trehalose accumulation in plant may improve abiotic stress tolerance. This is Probable trehalose-phosphate phosphatase C (TPPC) from Arabidopsis thaliana (Mouse-ear cress).